The following is a 738-amino-acid chain: Polyribonucleotide nucleotidyltransferase (738 aa).

Aspartate 487 and aspartate 493 together coordinate Mg(2+). The KH domain maps to 554 to 613; the sequence is PKIVTMTINPDKIRDVIGPGGKMINSIIDQTGVKIDIEQDGTVFIASTDQEGIDLAMSMI. The 69-residue stretch at 623–691 folds into the S1 motif domain; the sequence is GEVYDATVRR…DKGRVNASRK (69 aa). Residues 704 to 738 form a disordered region; the sequence is EAYEAKRKAARESRPPRDSRPPRRDGDRRPPRSTN.

Belongs to the polyribonucleotide nucleotidyltransferase family. It depends on Mg(2+) as a cofactor.

It localises to the cytoplasm. The catalysed reaction is RNA(n+1) + phosphate = RNA(n) + a ribonucleoside 5'-diphosphate. Functionally, involved in mRNA degradation. Catalyzes the phosphorolysis of single-stranded polyribonucleotides processively in the 3'- to 5'-direction. The chain is Polyribonucleotide nucleotidyltransferase from Exiguobacterium sp. (strain ATCC BAA-1283 / AT1b).